The primary structure comprises 359 residues: Protein-arginine kinase (359 aa).

Residues 25–257 (IVISSRVRLA…QQVIEQERML (233 aa)) enclose the Phosphagen kinase C-terminal domain. ATP contacts are provided by residues 28–32 (SSRVR), His93, Arg128, 179–183 (RASLM), and 210–215 (RGIYGE). Positions 340–345 (RDAKRA) match the RDXXRA motif of the pArg binding pocket involved in allosteric regulation motif.

Belongs to the ATP:guanido phosphotransferase family.

It catalyses the reaction L-arginyl-[protein] + ATP = N(omega)-phospho-L-arginyl-[protein] + ADP + H(+). With respect to regulation, appears to be allosterically activated by the binding of pArg-containing polypeptides to the pArg-binding pocket localized in the C-terminal domain of McsB. Its function is as follows. Catalyzes the specific phosphorylation of arginine residues in proteins. This chain is Protein-arginine kinase, found in Syntrophomonas wolfei subsp. wolfei (strain DSM 2245B / Goettingen).